Consider the following 520-residue polypeptide: Putative cytochrome P450 CYP13A4 (520 aa).

Cys-464 is a heme binding site.

This sequence belongs to the cytochrome P450 family. Requires heme as cofactor.

Its function is as follows. Cytochromes P450 are a group of heme-thiolate monooxygenases. They oxidize a variety of structurally unrelated compounds, including steroids, fatty acids, and xenobiotics. The sequence is that of Putative cytochrome P450 CYP13A4 (cyp-13A4) from Caenorhabditis elegans.